The sequence spans 430 residues: ATP-dependent RNA helicase RhlB (430 aa).

The Q motif motif lies at 9–37 (QKFSDFALHPQVIEALETKGFHNCTPIQA). One can recognise a Helicase ATP-binding domain in the interval 40–219 (LPFTLSGRDV…FENMNNAEYV (180 aa)). 53–60 (AQTGTGKT) contributes to the ATP binding site. Positions 165–168 (DEAD) match the DEAD box motif. The 146-residue stretch at 245-390 (RLLQTLIEEE…VSRYNSDALM (146 aa)) folds into the Helicase C-terminal domain. The interval 388–430 (ALMTDLPPPKRLTRNRSGNGPRRGGNNNRRSSASRSPNRKRSG) is disordered. A compositionally biased stretch (low complexity) spans 402–423 (NRSGNGPRRGGNNNRRSSASRS).

It belongs to the DEAD box helicase family. RhlB subfamily. Component of the RNA degradosome, which is a multiprotein complex involved in RNA processing and mRNA degradation.

It localises to the cytoplasm. It catalyses the reaction ATP + H2O = ADP + phosphate + H(+). In terms of biological role, DEAD-box RNA helicase involved in RNA degradation. Has RNA-dependent ATPase activity and unwinds double-stranded RNA. The polypeptide is ATP-dependent RNA helicase RhlB (Erwinia tasmaniensis (strain DSM 17950 / CFBP 7177 / CIP 109463 / NCPPB 4357 / Et1/99)).